The following is a 336-amino-acid chain: Glyceraldehyde-3-phosphate dehydrogenase 1 (336 aa).

NAD(+) is bound by residues 12–13, D34, and R79; that span reads RI. Residues 149-151, T180, 209-210, and R232 contribute to the D-glyceraldehyde 3-phosphate site; these read SCT and TG. The Nucleophile role is filled by C150. Residue N314 coordinates NAD(+).

Belongs to the glyceraldehyde-3-phosphate dehydrogenase family. Homotetramer.

It is found in the cytoplasm. The catalysed reaction is D-glyceraldehyde 3-phosphate + phosphate + NAD(+) = (2R)-3-phospho-glyceroyl phosphate + NADH + H(+). The protein operates within carbohydrate degradation; glycolysis; pyruvate from D-glyceraldehyde 3-phosphate: step 1/5. Inhibited by koningic acid through the interaction of cysteine residues with koningic acid even at very low concentrations. The sequence is that of Glyceraldehyde-3-phosphate dehydrogenase 1 (gpd1) from Trichoderma koningii (Hypocrea koningii).